We begin with the raw amino-acid sequence, 244 residues long: 5-oxoprolinase subunit A (244 aa).

This sequence belongs to the LamB/PxpA family. Forms a complex composed of PxpA, PxpB and PxpC.

It carries out the reaction 5-oxo-L-proline + ATP + 2 H2O = L-glutamate + ADP + phosphate + H(+). In terms of biological role, catalyzes the cleavage of 5-oxoproline to form L-glutamate coupled to the hydrolysis of ATP to ADP and inorganic phosphate. This is 5-oxoprolinase subunit A from Salmonella agona (strain SL483).